A 100-amino-acid chain; its full sequence is MKLTPREKDKLLIFTAALLAERRRARGLKLNYPEAVAFITAALMEAARDGKTVAEVMHYGTTLLTRDDVMEGVPEMIPDIQVEATFPDGTKLVTVHHPIP.

The protein belongs to the urease gamma subunit family. As to quaternary structure, heterotrimer of UreA (gamma), UreB (beta) and UreC (alpha) subunits. Three heterotrimers associate to form the active enzyme.

Its subcellular location is the cytoplasm. It carries out the reaction urea + 2 H2O + H(+) = hydrogencarbonate + 2 NH4(+). It participates in nitrogen metabolism; urea degradation; CO(2) and NH(3) from urea (urease route): step 1/1. This is Urease subunit gamma from Burkholderia multivorans (strain ATCC 17616 / 249).